Reading from the N-terminus, the 204-residue chain is Allurin (204 aa).

A signal peptide spans methionine 1–glycine 19. Positions valine 36–valine 138 constitute an SCP domain. The helical transmembrane segment at tryptophan 140–valine 161 threads the bilayer.

The protein belongs to the CRISP family. As to expression, expressed only in oviduct.

The protein localises to the membrane. The protein resides in the secreted. Its function is as follows. Involved in sperm chemoattraction. In Xenopus tropicalis (Western clawed frog), this protein is Allurin (crisp-a).